The following is a 254-amino-acid chain: 4-hydroxy-tetrahydrodipicolinate reductase (254 aa).

Residues Gly-8–Met-13, Gly-87–Thr-89, and Ala-111–Met-114 each bind NAD(+). The Proton donor/acceptor role is filled by His-143. His-144 is a (S)-2,3,4,5-tetrahydrodipicolinate binding site. Lys-147 (proton donor) is an active-site residue. Gly-153–Thr-154 is a binding site for (S)-2,3,4,5-tetrahydrodipicolinate.

It belongs to the DapB family.

It localises to the cytoplasm. It catalyses the reaction (S)-2,3,4,5-tetrahydrodipicolinate + NAD(+) + H2O = (2S,4S)-4-hydroxy-2,3,4,5-tetrahydrodipicolinate + NADH + H(+). It carries out the reaction (S)-2,3,4,5-tetrahydrodipicolinate + NADP(+) + H2O = (2S,4S)-4-hydroxy-2,3,4,5-tetrahydrodipicolinate + NADPH + H(+). It functions in the pathway amino-acid biosynthesis; L-lysine biosynthesis via DAP pathway; (S)-tetrahydrodipicolinate from L-aspartate: step 4/4. Its function is as follows. Catalyzes the conversion of 4-hydroxy-tetrahydrodipicolinate (HTPA) to tetrahydrodipicolinate. The protein is 4-hydroxy-tetrahydrodipicolinate reductase of Campylobacter fetus subsp. fetus (strain 82-40).